Consider the following 300-residue polypeptide: MKDRIVRATAANGGIRLVAVLTTESSLEAKKRHGLSYITTCILGRAFSASLLLASSMKIMHGRVTLRVRSDGPLKGLLVDAGRDGKVRGYVGNPDLELDLVKINNNKYSFDFTKALGTGYLNVIRDSGIGEPFTSTVELVNGNIAEDLASYLYHSEQTPSAVFIGEKIQNKNVICSGGLLAQVLPKKDTDPLLVSLLEERCKEINSFSEDLFHSQDNLLSLIRNIFPDIDDKSISEKARSQEVGFKCKCSKQRSLNAMKMLDKCELEDILKKDGRAELVCEFCKNKYLINYEEIRLMIES.

Intrachain disulfides connect Cys-247–Cys-249 and Cys-280–Cys-283.

Belongs to the HSP33 family. In terms of processing, under oxidizing conditions two disulfide bonds are formed involving the reactive cysteines. Under reducing conditions zinc is bound to the reactive cysteines and the protein is inactive.

The protein localises to the cytoplasm. Its function is as follows. Redox regulated molecular chaperone. Protects both thermally unfolding and oxidatively damaged proteins from irreversible aggregation. Plays an important role in the bacterial defense system toward oxidative stress. This chain is 33 kDa chaperonin, found in Prochlorococcus marinus (strain MIT 9312).